Consider the following 278-residue polypeptide: Large ribosomal subunit protein uL2 (278 aa).

Disordered stretches follow at residues 1–20, 25–57, and 224–278; these read MAIR…SVSD, TRST…RGGG, and VVMN…GKKR. Composition is skewed to basic residues over residues 45-57 and 269-278; these read AHGR…RGGG and VRRRKTGKKR.

It belongs to the universal ribosomal protein uL2 family. In terms of assembly, part of the 50S ribosomal subunit. Forms a bridge to the 30S subunit in the 70S ribosome.

Its function is as follows. One of the primary rRNA binding proteins. Required for association of the 30S and 50S subunits to form the 70S ribosome, for tRNA binding and peptide bond formation. It has been suggested to have peptidyltransferase activity; this is somewhat controversial. Makes several contacts with the 16S rRNA in the 70S ribosome. In Nocardia farcinica (strain IFM 10152), this protein is Large ribosomal subunit protein uL2.